Consider the following 1905-residue polypeptide: Tudor domain-containing 6-like (1905 aa).

Tudor domains follow at residues 1–30 (MVEV…LREM), 215–279 (YERG…LFDL), and 435–491 (SVTP…AYEL). The tract at residues 564–795 (SRAEGSFGNS…SKLTPPLSKL (232 aa)) is disordered. Residues 573–591 (SEKRNQLNDLDRGGRKETT) are compositionally biased toward basic and acidic residues. Polar residues predominate over residues 592 to 602 (SKFQPYSQGSK). Residues 622–631 (FQTKEREQFE) are compositionally biased toward basic and acidic residues. Composition is skewed to polar residues over residues 651–660 (VQKNMSQSGF) and 687–704 (LYSQ…SSYS). The segment covering 715-726 (RSKERQVSEHKQ) has biased composition (basic and acidic residues). 2 stretches are compositionally biased toward polar residues: residues 746–766 (KASQ…GSDQ) and 774–787 (NASQ…QESK). Tudor domains are found at residues 853 to 910 (YVNL…LLSI) and 1060 to 1118 (EIEV…IAAI). Disordered regions lie at residues 1213–1245 (IEDN…TPAV), 1449–1599 (EDFE…TETE), 1655–1682 (VEDL…SGPV), and 1827–1905 (ESPA…APSV). Acidic residues-rich tracts occupy residues 1491–1500 (EAEGLEDQDQ) and 1522–1535 (EQAE…DPGT). Residues 1553-1588 (SQEHKDFPEQEEDRVAEHKNDISEPDLQSKEQKEDL) are compositionally biased toward basic and acidic residues. Residues 1663 to 1673 (QESQICISGSD) are compositionally biased toward polar residues. The span at 1876 to 1887 (FEPETDDMEQME) shows a compositional bias: acidic residues.

Interacts with FRGY2 (a component of messenger ribonucleoprotein (mRNP) particle) during germ cell development. In terms of tissue distribution, expressed in testis.

The protein resides in the cytoplasm. Its function is as follows. Tudor domain-containing protein involved in germ cell development, more specifically the formation of chromatoid body (during spermiogenesis), Balbiani body (during oogenesis), germ plasm (upon fertilization), and for proper miRNA expression and spliceosome maturation. Component of cytoplasmic mRNP particle through interaction with FRGY2, and binds to maternal mRNA related to cell cycle (RCC1, RHAMM, INCENP-A, MAD2L1, HELLS) and a germ plasm specific mRNA (Dead end/Dnd1), it is proposed a role in translational activation of the maternal mRNAs repressed in mRNP particle. The sequence is that of Tudor domain-containing 6-like from Xenopus laevis (African clawed frog).